The sequence spans 65 residues: Large ribosomal subunit protein bL35 (65 aa).

This sequence belongs to the bacterial ribosomal protein bL35 family.

The protein is Large ribosomal subunit protein bL35 of Laribacter hongkongensis (strain HLHK9).